Reading from the N-terminus, the 349-residue chain is Protein-glutamate methylesterase/protein-glutamine glutaminase 1 (349 aa).

Positions 4-119 (RILVVDDSAV…KGFLEDSARR (116 aa)) constitute a Response regulatory domain. D53 bears the 4-aspartylphosphate mark. One can recognise a CheB-type methylesterase domain in the interval 159–349 (PRAGRAELVV…VASAVLAWAR (191 aa)). Catalysis depends on residues S172, H198, and D293.

This sequence belongs to the CheB family. Post-translationally, phosphorylated by CheA. Phosphorylation of the N-terminal regulatory domain activates the methylesterase activity.

It localises to the cytoplasm. It catalyses the reaction [protein]-L-glutamate 5-O-methyl ester + H2O = L-glutamyl-[protein] + methanol + H(+). The catalysed reaction is L-glutaminyl-[protein] + H2O = L-glutamyl-[protein] + NH4(+). Its function is as follows. Involved in chemotaxis. Part of a chemotaxis signal transduction system that modulates chemotaxis in response to various stimuli. Catalyzes the demethylation of specific methylglutamate residues introduced into the chemoreceptors (methyl-accepting chemotaxis proteins or MCP) by CheR. Also mediates the irreversible deamidation of specific glutamine residues to glutamic acid. This is Protein-glutamate methylesterase/protein-glutamine glutaminase 1 from Anaeromyxobacter dehalogenans (strain 2CP-C).